The following is a 644-amino-acid chain: 1-deoxy-D-xylulose-5-phosphate synthase (644 aa).

Thiamine diphosphate is bound by residues histidine 78 and 120-122; that span reads GHA. Aspartate 149 serves as a coordination point for Mg(2+). Residues 150-151, asparagine 178, and glutamate 373 contribute to the thiamine diphosphate site; that span reads AA. Asparagine 178 is a binding site for Mg(2+).

This sequence belongs to the transketolase family. DXPS subfamily. In terms of assembly, homodimer. Mg(2+) serves as cofactor. The cofactor is thiamine diphosphate.

It catalyses the reaction D-glyceraldehyde 3-phosphate + pyruvate + H(+) = 1-deoxy-D-xylulose 5-phosphate + CO2. It functions in the pathway metabolic intermediate biosynthesis; 1-deoxy-D-xylulose 5-phosphate biosynthesis; 1-deoxy-D-xylulose 5-phosphate from D-glyceraldehyde 3-phosphate and pyruvate: step 1/1. Its function is as follows. Catalyzes the acyloin condensation reaction between C atoms 2 and 3 of pyruvate and glyceraldehyde 3-phosphate to yield 1-deoxy-D-xylulose-5-phosphate (DXP). The protein is 1-deoxy-D-xylulose-5-phosphate synthase of Chlamydia abortus (strain DSM 27085 / S26/3) (Chlamydophila abortus).